Reading from the N-terminus, the 326-residue chain is tRNA uridine(34) hydroxylase (326 aa).

One can recognise a Rhodanese domain in the interval 122 to 218 (EENRCLVLDV…YGQAVGTGKW (97 aa)). Catalysis depends on Cys178, which acts as the Cysteine persulfide intermediate.

Belongs to the TrhO family.

It carries out the reaction uridine(34) in tRNA + AH2 + O2 = 5-hydroxyuridine(34) in tRNA + A + H2O. Catalyzes oxygen-dependent 5-hydroxyuridine (ho5U) modification at position 34 in tRNAs. The sequence is that of tRNA uridine(34) hydroxylase from Chlamydia abortus (strain DSM 27085 / S26/3) (Chlamydophila abortus).